Consider the following 350-residue polypeptide: S-adenosylmethionine:tRNA ribosyltransferase-isomerase (350 aa).

Belongs to the QueA family. As to quaternary structure, monomer.

It localises to the cytoplasm. The catalysed reaction is 7-aminomethyl-7-carbaguanosine(34) in tRNA + S-adenosyl-L-methionine = epoxyqueuosine(34) in tRNA + adenine + L-methionine + 2 H(+). Its pathway is tRNA modification; tRNA-queuosine biosynthesis. Functionally, transfers and isomerizes the ribose moiety from AdoMet to the 7-aminomethyl group of 7-deazaguanine (preQ1-tRNA) to give epoxyqueuosine (oQ-tRNA). The protein is S-adenosylmethionine:tRNA ribosyltransferase-isomerase of Parvibaculum lavamentivorans (strain DS-1 / DSM 13023 / NCIMB 13966).